The primary structure comprises 78 residues: MEDEIELKTAPADFRFPTTNQTRHCFTRYIEFHRCTTAKGEESNDCERFAKYYRALCPGEWVDKWNEQRESGTFPGPL.

Residues 22–65 (TRHCFTRYIEFHRCTTAKGEESNDCERFAKYYRALCPGEWVDKW) form the CHCH domain. The Cx9C motif signature appears at 25–35 (CFTRYIEFHRC). Cystine bridges form between Cys25–Cys57 and Cys35–Cys46. The Cx10C motif motif lies at 46–57 (CERFAKYYRALC).

This sequence belongs to the cytochrome c oxidase subunit 6B (TC 3.D.4.8) family. In terms of tissue distribution, specifically expressed in roots.

It localises to the mitochondrion. Functionally, this protein is one of the nuclear-coded polypeptide chains of cytochrome c oxidase, the terminal oxidase in mitochondrial electron transport. This protein may be one of the heme-binding subunits of the oxidase. This is Cytochrome c oxidase subunit 6b-2 (COX6B-2) from Arabidopsis thaliana (Mouse-ear cress).